The sequence spans 102 residues: Large ribosomal subunit protein bL21 (102 aa).

This sequence belongs to the bacterial ribosomal protein bL21 family. Part of the 50S ribosomal subunit. Contacts protein L20.

In terms of biological role, this protein binds to 23S rRNA in the presence of protein L20. The chain is Large ribosomal subunit protein bL21 from Levilactobacillus brevis (strain ATCC 367 / BCRC 12310 / CIP 105137 / JCM 1170 / LMG 11437 / NCIMB 947 / NCTC 947) (Lactobacillus brevis).